Consider the following 327-residue polypeptide: MTISFKGLARGVACAALVLAALPAAAKEFRLGLITPPPHTWTKAAEAFGAELSEKSGGAHSVSVFPARQLGNEAQMLQQLQTGALDMAFMTVAEVSNRVPNMGAFYAPYLAGDINHAAAILRSDTARGMLAVLPQEAGVVGVGFGSAGMRQILSRGAVNSAADLSGLKLRITPFDPILDFYNALGAAPTPMPLPAVYDALANGQVDAIDMDVELINVLKYHEHADTILISNHMMFPMVGLISARVYAGMSDADKAMISELMAKHVDSTLDVYMVKEPEWTDALTKVGKTFKRVDQSFFGDAIAQWETIWADKAPSLPELRKTAADLQ.

The first 26 residues, 1 to 26 (MTISFKGLARGVACAALVLAALPAAA), serve as a signal peptide directing secretion. 3-hydroxybenzoate-binding positions include 39 to 41 (HTW), R150, 170 to 172 (RIT), and D211.

It belongs to the bacterial solute-binding protein 7 family. As to quaternary structure, the complex is comprised of an extracytoplasmic solute-binding protein and a heteromeric permease formed by two transmembrane proteins.

The protein localises to the periplasm. In terms of biological role, solute-binding protein that binds 3,4-dihydroxybenzoate and 3-hydroxybenzoate (in vitro). Probably part of a tripartite ATP-independent periplasmic (TRAP) transport system that mediates solute transport into the cytoplasm. The chain is Solute-binding protein SPO1773 from Ruegeria pomeroyi (strain ATCC 700808 / DSM 15171 / DSS-3) (Silicibacter pomeroyi).